The following is an 83-amino-acid chain: Parvalbumin beta 3 (83 aa).

2 EF-hand domains span residues 13 to 48 and 52 to 83; these read KSND…FSAG and LTAG…LVKA. Residues D26, D28, S30, F32, E34, E37, D65, D67, D69, M71, and E76 each contribute to the Ca(2+) site.

This sequence belongs to the parvalbumin family.

Its function is as follows. In muscle, parvalbumin is thought to be involved in relaxation after contraction. It binds two calcium ions. The protein is Parvalbumin beta 3 of Macruronus novaezelandiae (Blue grenadier).